Consider the following 234-residue polypeptide: Adenylate dimethylallyltransferase (234 aa).

It belongs to the isopentenyl transferase family.

The catalysed reaction is dimethylallyl diphosphate + AMP = N(6)-(dimethylallyl)adenosine 5'-phosphate + diphosphate. In terms of biological role, transfers dimethylallyl groups to AMP as part of the biosynthesis of cytokinin phytohormones. This chain is Adenylate dimethylallyltransferase (ptz), found in Pseudomonas savastanoi (Pseudomonas syringae pv. savastanoi).